The following is a 153-amino-acid chain: Iron-sulfur cluster assembly scaffold protein IscU 1 (153 aa).

Residues Cys33, Cys58, His101, and Cys102 each coordinate [2Fe-2S] cluster.

It belongs to the NifU family. Forms a heterotetramer with IscS2.

A scaffold on which IscS assembles Fe-S clusters. Subsequently gives the nascent cluster to other proteins. It is likely that Fe-S cluster coordination is flexible as the role of this complex is to build and then hand off Fe-S clusters. The chain is Iron-sulfur cluster assembly scaffold protein IscU 1 (iscU1) from Archaeoglobus fulgidus (strain ATCC 49558 / DSM 4304 / JCM 9628 / NBRC 100126 / VC-16).